The primary structure comprises 152 residues: Large ribosomal subunit protein bL9 (152 aa).

This sequence belongs to the bacterial ribosomal protein bL9 family.

Its function is as follows. Binds to the 23S rRNA. The chain is Large ribosomal subunit protein bL9 from Prochlorococcus marinus (strain NATL1A).